The chain runs to 195 residues: Dephospho-CoA kinase (195 aa).

The DPCK domain occupies 3-195; it reads IIGLTGSIAM…FSIIENLLKN (193 aa). Residue 11-16 participates in ATP binding; sequence AMGKST.

The protein belongs to the CoaE family.

The protein localises to the cytoplasm. The enzyme catalyses 3'-dephospho-CoA + ATP = ADP + CoA + H(+). The protein operates within cofactor biosynthesis; coenzyme A biosynthesis; CoA from (R)-pantothenate: step 5/5. Functionally, catalyzes the phosphorylation of the 3'-hydroxyl group of dephosphocoenzyme A to form coenzyme A. In Bartonella quintana (strain Toulouse) (Rochalimaea quintana), this protein is Dephospho-CoA kinase.